The primary structure comprises 225 residues: UPF0758 protein XOO0495 (225 aa).

Residues 102–224 enclose the MPN domain; sequence ALSDPPSVGR…PVSLAERGWL (123 aa). 3 residues coordinate Zn(2+): His173, His175, and Asp186. The JAMM motif motif lies at 173–186; it reads HNHPSGNPEPSKAD.

The protein belongs to the UPF0758 family.

This chain is UPF0758 protein XOO0495, found in Xanthomonas oryzae pv. oryzae (strain KACC10331 / KXO85).